The following is a 276-amino-acid chain: MEVKPLKKLKLYGFNNLTKTLSFNMYDICYAKTPEHRDAYIQYIDEEYNAQRLTSIVTEVARIVGANILNIAKQDYDPQGASVTMLIAEEHLGPENPDDNPFDPVYTDKEGPLPDAVVAHLDKSHITVHTYPESHPHGGISTFRADIDVSTCGQISPLKALNFLIESFAPDIIVADYRVRGFTRDVDGKKVFIDHKINSIQNYVDRKYRDLYQMIDVTVFQEYIFHTKMILKDFDLDNYLFGTAKKELSINDKRKIKQRLKKEMAEIFYGKNMPRM.

S124 (schiff-base intermediate with substrate; via pyruvic acid) is an active-site residue. At S124 the chain carries Pyruvic acid (Ser); by autocatalysis. H129 acts as the Proton acceptor; for processing activity in catalysis. The Proton donor; for catalytic activity role is filled by C152.

This sequence belongs to the prokaryotic AdoMetDC family. Type 2 subfamily. In terms of assembly, heterooctamer of four alpha and four beta chains arranged as a tetramer of alpha/beta heterodimers. Pyruvate serves as cofactor. Post-translationally, is synthesized initially as an inactive proenzyme. Formation of the active enzyme involves a self-maturation process in which the active site pyruvoyl group is generated from an internal serine residue via an autocatalytic post-translational modification. Two non-identical subunits are generated from the proenzyme in this reaction, and the pyruvate is formed at the N-terminus of the alpha chain, which is derived from the carboxyl end of the proenzyme. The post-translation cleavage follows an unusual pathway, termed non-hydrolytic serinolysis, in which the side chain hydroxyl group of the serine supplies its oxygen atom to form the C-terminus of the beta chain, while the remainder of the serine residue undergoes an oxidative deamination to produce ammonia and the pyruvoyl group blocking the N-terminus of the alpha chain.

The enzyme catalyses S-adenosyl-L-methionine + H(+) = S-adenosyl 3-(methylsulfanyl)propylamine + CO2. The protein operates within amine and polyamine biosynthesis; S-adenosylmethioninamine biosynthesis; S-adenosylmethioninamine from S-adenosyl-L-methionine: step 1/1. Functionally, catalyzes the decarboxylation of S-adenosylmethionine to S-adenosylmethioninamine (dcAdoMet), the propylamine donor required for the synthesis of the polyamines spermine and spermidine from the diamine putrescine. The polypeptide is S-adenosylmethionine decarboxylase proenzyme (Desulfitobacterium hafniense (strain Y51)).